The sequence spans 239 residues: 1-(5-phosphoribosyl)-5-[(5-phosphoribosylamino)methylideneamino] imidazole-4-carboxamide isomerase (239 aa).

D8 functions as the Proton acceptor in the catalytic mechanism. D129 functions as the Proton donor in the catalytic mechanism.

This sequence belongs to the HisA/HisF family.

It localises to the cytoplasm. The catalysed reaction is 1-(5-phospho-beta-D-ribosyl)-5-[(5-phospho-beta-D-ribosylamino)methylideneamino]imidazole-4-carboxamide = 5-[(5-phospho-1-deoxy-D-ribulos-1-ylimino)methylamino]-1-(5-phospho-beta-D-ribosyl)imidazole-4-carboxamide. It functions in the pathway amino-acid biosynthesis; L-histidine biosynthesis; L-histidine from 5-phospho-alpha-D-ribose 1-diphosphate: step 4/9. This is 1-(5-phosphoribosyl)-5-[(5-phosphoribosylamino)methylideneamino] imidazole-4-carboxamide isomerase from Roseobacter denitrificans (strain ATCC 33942 / OCh 114) (Erythrobacter sp. (strain OCh 114)).